A 157-amino-acid chain; its full sequence is Tripartite terminase subunit 2 (157 aa).

A disordered region spans residues 1–69; sequence MSWAKQRVPF…DGEDGHALPD (69 aa). Positions 11 to 27 are enriched in acidic residues; sequence LDDDDGEEENDVQDDVD.

Belongs to the herpesviridae TRM2 protein family. As to quaternary structure, associates with TRM1 and TRM3 to form the tripartite terminase complex.

The protein resides in the host nucleus. Component of the molecular motor that translocates viral genomic DNA in empty capsid during DNA packaging. Forms a tripartite terminase complex together with TRM1 and TRM3 in the host cytoplasm. Once the complex reaches the host nucleus, it interacts with the capsid portal vertex. This portal forms a ring in which genomic DNA is translocated into the capsid. This is Tripartite terminase subunit 2 from Homo sapiens (Human).